The sequence spans 344 residues: Photosystem II protein D1 (344 aa).

Thr-2 carries the N-acetylthreonine modification. The residue at position 2 (Thr-2) is a Phosphothreonine. Transmembrane regions (helical) follow at residues 29–46, 118–133, and 142–156; these read YIGW…TATS, HFLL…EWEL, and WIAV…AATA. Chlorophyll a is bound at residue His-118. Tyr-126 contributes to the pheophytin a binding site. 2 residues coordinate [CaMn4O5] cluster: Asp-170 and Glu-189. A helical membrane pass occupies residues 197 to 218; the sequence is FHMLGVAGVFGGSLFSAMHGSL. His-198 contributes to the chlorophyll a binding site. A quinone-binding positions include His-215 and 264–265; that span reads SF. A Fe cation-binding site is contributed by His-215. Fe cation is bound at residue His-272. A helical transmembrane segment spans residues 274-288; it reads FLAAWPVVCIWFTAL. [CaMn4O5] cluster is bound by residues His-332, Glu-333, Asp-342, and Ala-344.

The protein belongs to the reaction center PufL/M/PsbA/D family. PSII is composed of 1 copy each of membrane proteins PsbA, PsbB, PsbC, PsbD, PsbE, PsbF, PsbH, PsbI, PsbJ, PsbK, PsbL, PsbM, PsbT, PsbX, PsbY, PsbZ, Psb30/Ycf12, at least 3 peripheral proteins of the oxygen-evolving complex and a large number of cofactors. It forms dimeric complexes. The D1/D2 heterodimer binds P680, chlorophylls that are the primary electron donor of PSII, and subsequent electron acceptors. It shares a non-heme iron and each subunit binds pheophytin, quinone, additional chlorophylls, carotenoids and lipids. D1 provides most of the ligands for the Mn4-Ca-O5 cluster of the oxygen-evolving complex (OEC). There is also a Cl(-1) ion associated with D1 and D2, which is required for oxygen evolution. The PSII complex binds additional chlorophylls, carotenoids and specific lipids. serves as cofactor. Post-translationally, tyr-161 forms a radical intermediate that is referred to as redox-active TyrZ, YZ or Y-Z.

It is found in the plastid. It localises to the chloroplast thylakoid membrane. It catalyses the reaction 2 a plastoquinone + 4 hnu + 2 H2O = 2 a plastoquinol + O2. Functionally, photosystem II (PSII) is a light-driven water:plastoquinone oxidoreductase that uses light energy to abstract electrons from H(2)O, generating O(2) and a proton gradient subsequently used for ATP formation. It consists of a core antenna complex that captures photons, and an electron transfer chain that converts photonic excitation into a charge separation. The D1/D2 (PsbA/PsbD) reaction center heterodimer binds P680, the primary electron donor of PSII as well as several subsequent electron acceptors. The protein is Photosystem II protein D1 of Staurastrum punctulatum (Green alga).